The sequence spans 602 residues: uncharacterized protein (602 aa).

Positions 51 to 210 (QYLGTQPRDF…PFVSYQPDAD (160 aa)) constitute a Helicase ATP-binding domain. Basic and acidic residues predominate over residues 430–439 (PHRESAHDPL). Disordered stretches follow at residues 430–452 (PHRESAHDPLDGDPATRTQTERG) and 518–538 (RAQLQKGATQPATSGASASVH). The segment covering 523–534 (KGATQPATSGAS) has biased composition (polar residues).

This sequence to M.leprae ML1624.

This is an uncharacterized protein from Mycobacterium tuberculosis (strain ATCC 25618 / H37Rv).